The primary structure comprises 568 residues: Proline--tRNA ligase (568 aa).

Belongs to the class-II aminoacyl-tRNA synthetase family. ProS type 1 subfamily. Homodimer.

It localises to the cytoplasm. The enzyme catalyses tRNA(Pro) + L-proline + ATP = L-prolyl-tRNA(Pro) + AMP + diphosphate. In terms of biological role, catalyzes the attachment of proline to tRNA(Pro) in a two-step reaction: proline is first activated by ATP to form Pro-AMP and then transferred to the acceptor end of tRNA(Pro). As ProRS can inadvertently accommodate and process non-cognate amino acids such as alanine and cysteine, to avoid such errors it has two additional distinct editing activities against alanine. One activity is designated as 'pretransfer' editing and involves the tRNA(Pro)-independent hydrolysis of activated Ala-AMP. The other activity is designated 'posttransfer' editing and involves deacylation of mischarged Ala-tRNA(Pro). The misacylated Cys-tRNA(Pro) is not edited by ProRS. This Campylobacter jejuni subsp. jejuni serotype O:6 (strain 81116 / NCTC 11828) protein is Proline--tRNA ligase.